Here is an 854-residue protein sequence, read N- to C-terminus: Golgin subfamily A member 6-like protein 22 (854 aa).

6 disordered regions span residues 1–114 (MLMW…HQEA), 320–348 (QEEK…MRRQ), 366–447 (MHEQ…MWRQ), 481–568 (QEEK…MWRQ), 581–681 (RQEE…EQEE), and 714–854 (QEEK…MQEH). The segment covering 15-35 (LPTHPHLPTHPHLPTHPHLPT) has biased composition (basic residues). The span at 45–66 (MSKETRQSKLAEAKEQLTDHHP) shows a compositional bias: basic and acidic residues. Polar residues-rich tracts occupy residues 67–77 (QTNPSVGTAAS) and 85–97 (NNGT…TSGG). Positions 100 to 114 (SPEDEQKASHQHQEA) are enriched in basic and acidic residues. Residues 103-854 (DEQKASHQHQ…RQQEEKMQEH (752 aa)) adopt a coiled-coil conformation.

Belongs to the GOLGA6 family.

This chain is Golgin subfamily A member 6-like protein 22, found in Homo sapiens (Human).